A 246-amino-acid polypeptide reads, in one-letter code: Ribonuclease 3 (246 aa).

The RNase III domain occupies 10–135; sequence LENFLTLNNI…FVAAIYLDLG (126 aa). Position 50 (glutamate 50) interacts with Mg(2+). The active site involves aspartate 54. Mg(2+) contacts are provided by aspartate 121 and glutamate 124. Glutamate 124 is an active-site residue. The DRBM domain occupies 161-230; sequence DPKSSFQEYI…ATRALETLKA (70 aa).

This sequence belongs to the ribonuclease III family. As to quaternary structure, homodimer. It depends on Mg(2+) as a cofactor.

The protein localises to the cytoplasm. It catalyses the reaction Endonucleolytic cleavage to 5'-phosphomonoester.. Functionally, digests double-stranded RNA. Involved in the processing of primary rRNA transcript to yield the immediate precursors to the large and small rRNAs (23S and 16S). Processes some mRNAs, and tRNAs when they are encoded in the rRNA operon. Processes pre-crRNA and tracrRNA of type II CRISPR loci if present in the organism. The polypeptide is Ribonuclease 3 (Mycoplasma mobile (strain ATCC 43663 / 163K / NCTC 11711) (Mesomycoplasma mobile)).